The sequence spans 167 residues: MTRKSFSFFLLGLILTVGIDQTVKYWIMHNMLLGTEIPLLPFLSLYHVRNSGIAFSFFSSFSHWGLIALTLIILIFLLWLWKNTEYNKFLSRFGLTLIIGGAIGNLIDRICFYYVIDYILFYIDDIFYFAVFNLADTFITLGVIAIVTEELRIWIKEKRHSKRTFSR.

3 consecutive transmembrane segments (helical) span residues 8–28, 61–81, and 93–113; these read FFLL…YWIM, FSHW…LWLW, and FGLT…ICFY. Catalysis depends on residues Asp-117 and Asp-136. Residues 126–146 form a helical membrane-spanning segment; sequence IFYFAVFNLADTFITLGVIAI.

It belongs to the peptidase A8 family.

The protein localises to the cell inner membrane. It catalyses the reaction Release of signal peptides from bacterial membrane prolipoproteins. Hydrolyzes -Xaa-Yaa-Zaa-|-(S,diacylglyceryl)Cys-, in which Xaa is hydrophobic (preferably Leu), and Yaa (Ala or Ser) and Zaa (Gly or Ala) have small, neutral side chains.. It functions in the pathway protein modification; lipoprotein biosynthesis (signal peptide cleavage). This protein specifically catalyzes the removal of signal peptides from prolipoproteins. The chain is Lipoprotein signal peptidase from Bartonella quintana (strain Toulouse) (Rochalimaea quintana).